The primary structure comprises 243 residues: Ice-binding protein K3-B1 (243 aa).

Positions 1 to 20 (MFSASSLLAVIALAISSVSA) are cleaved as a signal peptide.

Belongs to the ice-binding protein family.

In terms of biological role, binds to the surface of ice crystals. Has low thermal hysteresis (TH) activity, which is the ability to lower the freezing point of an aqueous solution below its melting point. The TH activity of this protein is approximately 0.3 degrees Celsius at 11 mM. This chain is Ice-binding protein K3-B1, found in Typhula ishikariensis (Gray snow mold fungus).